Reading from the N-terminus, the 272-residue chain is uncharacterized protein (272 aa).

Residues D71 and E163 contribute to the active site.

It belongs to the glycosyl hydrolase 25 family.

This is an uncharacterized protein from Escherichia coli O6:H1 (strain CFT073 / ATCC 700928 / UPEC).